A 477-amino-acid polypeptide reads, in one-letter code: Ribulose bisphosphate carboxylase large chain (477 aa).

Residues 1–2 (MS) constitute a propeptide that is removed on maturation. Pro-3 carries the N-acetylproline modification. Lys-14 carries the N6,N6,N6-trimethyllysine modification. 2 residues coordinate substrate: Asn-123 and Thr-173. Lys-175 serves as the catalytic Proton acceptor. Lys-177 is a binding site for substrate. Residues Lys-201, Asp-203, and Glu-204 each coordinate Mg(2+). Lys-201 is subject to N6-carboxylysine. The active-site Proton acceptor is the His-294. Substrate-binding residues include Arg-295, His-327, and Ser-379.

This sequence belongs to the RuBisCO large chain family. Type I subfamily. In terms of assembly, heterohexadecamer of 8 large chains and 8 small chains; disulfide-linked. The disulfide link is formed within the large subunit homodimers. Mg(2+) serves as cofactor. The disulfide bond which can form in the large chain dimeric partners within the hexadecamer appears to be associated with oxidative stress and protein turnover.

The protein resides in the plastid. The protein localises to the chloroplast. It carries out the reaction 2 (2R)-3-phosphoglycerate + 2 H(+) = D-ribulose 1,5-bisphosphate + CO2 + H2O. It catalyses the reaction D-ribulose 1,5-bisphosphate + O2 = 2-phosphoglycolate + (2R)-3-phosphoglycerate + 2 H(+). Its function is as follows. RuBisCO catalyzes two reactions: the carboxylation of D-ribulose 1,5-bisphosphate, the primary event in carbon dioxide fixation, as well as the oxidative fragmentation of the pentose substrate in the photorespiration process. Both reactions occur simultaneously and in competition at the same active site. The sequence is that of Ribulose bisphosphate carboxylase large chain from Dioscorea elephantipes (Elephant's foot yam).